Here is a 156-residue protein sequence, read N- to C-terminus: ATP synthase subunit b (156 aa).

A helical membrane pass occupies residues 11–31 (AIAFFIFVVFCMKYVWPPLMA).

It belongs to the ATPase B chain family. As to quaternary structure, F-type ATPases have 2 components, F(1) - the catalytic core - and F(0) - the membrane proton channel. F(1) has five subunits: alpha(3), beta(3), gamma(1), delta(1), epsilon(1). F(0) has three main subunits: a(1), b(2) and c(10-14). The alpha and beta chains form an alternating ring which encloses part of the gamma chain. F(1) is attached to F(0) by a central stalk formed by the gamma and epsilon chains, while a peripheral stalk is formed by the delta and b chains.

It is found in the cell inner membrane. In terms of biological role, f(1)F(0) ATP synthase produces ATP from ADP in the presence of a proton or sodium gradient. F-type ATPases consist of two structural domains, F(1) containing the extramembraneous catalytic core and F(0) containing the membrane proton channel, linked together by a central stalk and a peripheral stalk. During catalysis, ATP synthesis in the catalytic domain of F(1) is coupled via a rotary mechanism of the central stalk subunits to proton translocation. Component of the F(0) channel, it forms part of the peripheral stalk, linking F(1) to F(0). This chain is ATP synthase subunit b, found in Aeromonas hydrophila subsp. hydrophila (strain ATCC 7966 / DSM 30187 / BCRC 13018 / CCUG 14551 / JCM 1027 / KCTC 2358 / NCIMB 9240 / NCTC 8049).